Consider the following 334-residue polypeptide: Tryptophan--tRNA ligase (334 aa).

ATP is bound by residues 11 to 13 (QPS) and 19 to 20 (GN). The 'HIGH' region signature appears at 12 to 20 (PSGELTIGN). Residue D135 coordinates L-tryptophan. ATP contacts are provided by residues 147-149 (GDD), I186, and 195-199 (KMSKS). A 'KMSKS' region motif is present at residues 195–199 (KMSKS).

This sequence belongs to the class-I aminoacyl-tRNA synthetase family. In terms of assembly, homodimer.

The protein localises to the cytoplasm. It carries out the reaction tRNA(Trp) + L-tryptophan + ATP = L-tryptophyl-tRNA(Trp) + AMP + diphosphate + H(+). Catalyzes the attachment of tryptophan to tRNA(Trp). In Haemophilus influenzae (strain ATCC 51907 / DSM 11121 / KW20 / Rd), this protein is Tryptophan--tRNA ligase.